The primary structure comprises 1190 residues: DNA-directed RNA polymerase subunit beta (1190 aa).

The protein belongs to the RNA polymerase beta chain family. The RNAP catalytic core consists of 2 alpha, 1 beta, 1 beta' and 1 omega subunit. When a sigma factor is associated with the core the holoenzyme is formed, which can initiate transcription.

It catalyses the reaction RNA(n) + a ribonucleoside 5'-triphosphate = RNA(n+1) + diphosphate. In terms of biological role, DNA-dependent RNA polymerase catalyzes the transcription of DNA into RNA using the four ribonucleoside triphosphates as substrates. This Streptococcus suis (strain 98HAH33) protein is DNA-directed RNA polymerase subunit beta.